A 753-amino-acid chain; its full sequence is Polyadenylate-binding protein, cytoplasmic and nuclear (753 aa).

Residues 1 to 26 (MSAEVSTTPAADNTVNGTPEATNAAA) show a composition bias toward polar residues. Residues 1–52 (MSAEVSTTPAADNTVNGTPEATNAAATSAPEVTAVESASPSTTPSASQPHSA) form a disordered region. A compositionally biased stretch (low complexity) spans 37-52 (SASPSTTPSASQPHSA). RRM domains are found at residues 52–130 (ASLY…WSQR), 140–217 (GNVF…HHIS), 233–310 (TNVY…RAQK), and 336–460 (VNLY…LAQR). Disordered regions lie at residues 367–417 (VMRD…TEKK) and 602–645 (MGQG…REEV). Residues 379 to 417 (ESEKEKEKESNKENEKEGEEKTEEKPKESEEEPKKTEKK) are compositionally biased toward basic and acidic residues. Positions 605–631 (GIRGPGYGQGRGGAPVQGGPRPQGGRG) are enriched in gly residues. The PABC domain occupies 648–725 (TGGLTAQTLS…ALSVYDEYMK (78 aa)). Positions 728–753 (GEGEAPAESAKPKEDAAETATEENKS) are disordered. Basic and acidic residues predominate over residues 737 to 753 (AKPKEDAAETATEENKS).

The protein belongs to the polyadenylate-binding protein type-1 family.

Its subcellular location is the cytoplasm. The protein localises to the nucleus. Its function is as follows. Binds the poly(A) tail of mRNA. Appears to be an important mediator of the multiple roles of the poly(A) tail in mRNA biogenesis, stability and translation. In the nucleus, involved in both mRNA cleavage and polyadenylation. Is also required for efficient mRNA export to the cytoplasm. Acts in concert with a poly(A)-specific nuclease (PAN) to affect poly(A) tail shortening, which may occur concomitantly with either nucleocytoplasmic mRNA transport or translational initiation. In the cytoplasm, stimulates translation initiation and regulates mRNA decay through translation termination-coupled poly(A) shortening, probably mediated by PAN. The protein is Polyadenylate-binding protein, cytoplasmic and nuclear (pab1) of Aspergillus fumigatus (strain ATCC MYA-4609 / CBS 101355 / FGSC A1100 / Af293) (Neosartorya fumigata).